The chain runs to 482 residues: Ubiquitin carboxyl-terminal hydrolase 6 (482 aa).

A Ubiquitin-like domain is found at 2-77; sequence PTVSVKWQKK…LMMMGTADEI (76 aa). The USP domain occupies 104–478; it reads AGLVNLGNTC…MAYITMYKAR (375 aa). C113 (nucleophile) is an active-site residue. Residues 172–191 form a calmodulin-binding region; the sequence is SQFWMVLRKKYPQFSQLQNG. 2 stretches are compositionally biased toward basic and acidic residues: residues 350 to 361 and 371 to 381; these read PRQKLREEEGKK and GSKDSDVKMTD. Residues 350–407 form a disordered region; the sequence is PRQKLREEEGKKLGLQTSAKSGSKDSDVKMTDAEASANGSGESSTVNPQEGTSSEKET. Low complexity predominate over residues 382 to 393; the sequence is AEASANGSGESS. The active-site Proton acceptor is H430.

This sequence belongs to the peptidase C19 family. In terms of assembly, interacts with calmodulin (CaM).

The catalysed reaction is Thiol-dependent hydrolysis of ester, thioester, amide, peptide and isopeptide bonds formed by the C-terminal Gly of ubiquitin (a 76-residue protein attached to proteins as an intracellular targeting signal).. Recognizes and hydrolyzes the peptide bond at the C-terminal Gly of ubiquitin. Involved in the processing of poly-ubiquitin precursors as well as that of ubiquitinated proteins. This Arabidopsis thaliana (Mouse-ear cress) protein is Ubiquitin carboxyl-terminal hydrolase 6 (UBP6).